Consider the following 333-residue polypeptide: Fructose-1,6-bisphosphatase class 1 (333 aa).

The Mg(2+) site is built by glutamate 92, aspartate 113, leucine 115, and aspartate 116. Residues aspartate 116–serine 119, asparagine 209, tyrosine 242, and lysine 272 contribute to the substrate site. Residue glutamate 278 participates in Mg(2+) binding.

It belongs to the FBPase class 1 family. Homotetramer. Mg(2+) serves as cofactor.

It is found in the cytoplasm. It catalyses the reaction beta-D-fructose 1,6-bisphosphate + H2O = beta-D-fructose 6-phosphate + phosphate. It participates in carbohydrate biosynthesis; Calvin cycle. This is Fructose-1,6-bisphosphatase class 1 from Chlorobium chlorochromatii (strain CaD3).